Reading from the N-terminus, the 873-residue chain is Probable beta-glucosidase A (873 aa).

The signal sequence occupies residues 1-19; sequence MRFGWLEVAALTAASVANA. 3 N-linked (GlcNAc...) asparagine glycosylation sites follow: asparagine 71, asparagine 222, and asparagine 263. Residue aspartate 291 is part of the active site. 9 N-linked (GlcNAc...) asparagine glycosylation sites follow: asparagine 326, asparagine 333, asparagine 365, asparagine 453, asparagine 534, asparagine 553, asparagine 575, asparagine 679, and asparagine 725. Residues 730–765 form a disordered region; it reads EDSSDDPNYGWEDSEYIPEGARDGSPQPLLKAGGAP.

This sequence belongs to the glycosyl hydrolase 3 family.

The protein localises to the secreted. The catalysed reaction is Hydrolysis of terminal, non-reducing beta-D-glucosyl residues with release of beta-D-glucose.. The protein operates within glycan metabolism; cellulose degradation. In terms of biological role, beta-glucosidases are one of a number of cellulolytic enzymes involved in the degradation of cellulosic biomass. Catalyzes the last step releasing glucose from the inhibitory cellobiose. This Neosartorya fischeri (strain ATCC 1020 / DSM 3700 / CBS 544.65 / FGSC A1164 / JCM 1740 / NRRL 181 / WB 181) (Aspergillus fischerianus) protein is Probable beta-glucosidase A (bglA).